Consider the following 225-residue polypeptide: MRHGHPPTDIHHGINQGEPMDDNVLRVGIGGPVGSGKTALIEALVPVLIERGHRPAVITNDIYTQEDAQHVRRTLAGVLEPERVVGVETGACPHTAVRDDPTMNLAAGAEMLERFPDTDTLLYESGGDNLTLTFSPALVDLFLFVLDTAEGEKMPRKRGPGITESDLLVINKIDIAQYVRTDIGIMEADAHRVRDDRPVVLTDCLTGVGIDDIALYLESRRKVLI.

31–38 (GPVGSGKT) contacts GTP.

It belongs to the SIMIBI class G3E GTPase family. UreG subfamily. As to quaternary structure, homodimer. UreD, UreF and UreG form a complex that acts as a GTP-hydrolysis-dependent molecular chaperone, activating the urease apoprotein by helping to assemble the nickel containing metallocenter of UreC. The UreE protein probably delivers the nickel.

It is found in the cytoplasm. Functionally, facilitates the functional incorporation of the urease nickel metallocenter. This process requires GTP hydrolysis, probably effectuated by UreG. The polypeptide is Urease accessory protein UreG 2 (Streptomyces griseus subsp. griseus (strain JCM 4626 / CBS 651.72 / NBRC 13350 / KCC S-0626 / ISP 5235)).